A 1162-amino-acid chain; its full sequence is ATP-dependent helicase/deoxyribonuclease subunit B (1162 aa).

In terms of domain architecture, UvrD-like helicase ATP-binding spans 1 to 275 (MELNAYIGRA…QFFKQQYRFN (275 aa)). Residue 8–15 (GRAGTGKS) coordinates ATP. Residues 269-583 (KQQYRFNNKD…SIGTMDLAKV (315 aa)) form the UvrD-like helicase C-terminal domain. C784, C1117, C1120, and C1126 together coordinate [4Fe-4S] cluster.

Belongs to the helicase family. AddB/RexB type 1 subfamily. In terms of assembly, heterodimer of AddA and AddB. Requires Mg(2+) as cofactor. [4Fe-4S] cluster is required as a cofactor.

In terms of biological role, the heterodimer acts as both an ATP-dependent DNA helicase and an ATP-dependent, dual-direction single-stranded exonuclease. Recognizes the chi site generating a DNA molecule suitable for the initiation of homologous recombination. The AddB subunit has 5' -&gt; 3' nuclease activity but not helicase activity. The protein is ATP-dependent helicase/deoxyribonuclease subunit B of Staphylococcus haemolyticus (strain JCSC1435).